A 641-amino-acid polypeptide reads, in one-letter code: Protein TIC 62, chloroplastic (641 aa).

The N-terminal 63 residues, 1–63, are a transit peptide targeting the chloroplast; sequence MEGTCFLRGQ…LSLRASGPIR (63 aa). An N-acetylalanine modification is found at alanine 64. 84 to 113 is an NADP(+) binding site; the sequence is VFVAGATGKVGSRTVRELLKLGFRVRAGVR. A disordered region spans residues 328–641; the sequence is SKRPYVPPPK…SPLPSPVTNH (314 aa). A compositionally biased stretch (basic and acidic residues) spans 359–372; sequence APKEDEAPPKEKNV. Repeat copies occupy residues 376–397 and 444–465. The segment at 376–638 is 4 X 22 AA approximate repeats; the sequence is PLSPYASYED…PPTSPLPSPV (263 aa). The segment covering 393 to 402 has biased composition (low complexity); sequence IPNSTTSVSP. The span at 435–444 shows a compositional bias: basic and acidic residues; the sequence is KQVEEKKERP. Over residues 485 to 528 the composition is skewed to low complexity; sequence SSTVAKTVTETAVATSVTETSVATSVPETAVATSVTETAAPATS. Repeat 3 spans residues 532–553; the sequence is PLSPYAIYADLKPPTSPTPAST. Over residues 599–612 the composition is skewed to polar residues; the sequence is AIDTSLASGDNTAQ. Residues 617-638 form repeat 4; that stretch reads PLSPYTMYADMKPPTSPLPSPV. A compositionally biased stretch (pro residues) spans 630-641; the sequence is PTSPLPSPVTNH.

In terms of assembly, part of the Tic complex. Interacts with TIC110 and TIC55. Interacts with LFNR1 and LFNR2. Component of high molecular weight thylakoid LFNRs-containing protein complexes containing LIR1, LFNR1, LFNR2, TIC62 and TROL proteins. As to expression, expressed in cotyledons and leaves, but not in roots.

The protein localises to the plastid. Its subcellular location is the chloroplast inner membrane. The protein resides in the chloroplast stroma. It localises to the chloroplast thylakoid. In terms of biological role, involved in protein precursor import into chloroplasts. Part of the redox regulon consisting of TIC32, TIC 55 and TIC62. Acts as a membrane anchor of LFNR1 and LFNR2. Has a NADPH-dependent dehydrogenase activity, but only after preincubation with lipids. The chain is Protein TIC 62, chloroplastic from Arabidopsis thaliana (Mouse-ear cress).